A 220-amino-acid chain; its full sequence is Octanoyltransferase (220 aa).

In terms of domain architecture, BPL/LPL catalytic spans A36–L212. Residues R75–H82, S142–G144, and G155–A157 contribute to the substrate site. The active-site Acyl-thioester intermediate is C173.

This sequence belongs to the LipB family.

It localises to the cytoplasm. The catalysed reaction is octanoyl-[ACP] + L-lysyl-[protein] = N(6)-octanoyl-L-lysyl-[protein] + holo-[ACP] + H(+). Its pathway is protein modification; protein lipoylation via endogenous pathway; protein N(6)-(lipoyl)lysine from octanoyl-[acyl-carrier-protein]: step 1/2. Its function is as follows. Catalyzes the transfer of endogenously produced octanoic acid from octanoyl-acyl-carrier-protein onto the lipoyl domains of lipoate-dependent enzymes. Lipoyl-ACP can also act as a substrate although octanoyl-ACP is likely to be the physiological substrate. The polypeptide is Octanoyltransferase (Chromohalobacter salexigens (strain ATCC BAA-138 / DSM 3043 / CIP 106854 / NCIMB 13768 / 1H11)).